We begin with the raw amino-acid sequence, 237 residues long: Purine nucleoside phosphorylase DeoD-type (237 aa).

Residue H4 participates in a purine D-ribonucleoside binding. Phosphate is bound by residues G20, R24, R43, and 87-90 (RVGT). A purine D-ribonucleoside is bound by residues 179-181 (EME) and 203-204 (SD). D204 serves as the catalytic Proton donor.

Belongs to the PNP/UDP phosphorylase family. In terms of assembly, homohexamer; trimer of homodimers.

The enzyme catalyses a purine D-ribonucleoside + phosphate = a purine nucleobase + alpha-D-ribose 1-phosphate. The catalysed reaction is a purine 2'-deoxy-D-ribonucleoside + phosphate = a purine nucleobase + 2-deoxy-alpha-D-ribose 1-phosphate. In terms of biological role, catalyzes the reversible phosphorolytic breakdown of the N-glycosidic bond in the beta-(deoxy)ribonucleoside molecules, with the formation of the corresponding free purine bases and pentose-1-phosphate. This Streptococcus pyogenes serotype M12 (strain MGAS2096) protein is Purine nucleoside phosphorylase DeoD-type.